The following is a 711-amino-acid chain: MAVYRLCVTTGSYLKAGTLDNIYATLVGTCGESPKQKLDRVGRDFATGSVQKYKVRCASELGEILLLRLHKERFAFFCKDPWYCSRICVTTPDGSVVHFPCYQWIDGYCTVELRPGTARTICQDALPLLLDHRKRELQARQECYRWKIYAPGFPRMVDVSSFEEMESDKKFALTKTAPCADQDDNSGNRYLPGFPMKVDIPSLLHMEPNIRYSATKTASLIFNALPASLGMKIRGLLDRKGSWKRLDDIRNIFWCHKTFTSEYVTEHWCEDSFFGYQYLNGVNPIMLHCLSSLPSKLPVTNDMVAPLLGPGTCLQTELERGHIFLADYWILAEAPVHCLNGRQQYVTAPLCLLWLNPQGVLLPLAIQLSQIPGPESPIFLPTDCELDWLLAKTWVRNSEFLVHENNTHFLCTHLLCEAFSMATLRQLPLCHPVYKLLLPHTRYTLQVNTIARATLLNPDGLVDKVTSIGRRGLIYLMSTGLAHFTYTDFCLPDSLRARGVLTIPNYHYRDDGLKIWAAIERFVSEIVSYYYPNDACVQQDSELQAWVGEIFAQAFLGRESSGFPSRLCTPGELVKYLTAIIFNCSAQHAAVNSGQHDFGAWMPNAPSSMRQPPPQTKGNTTMESYLETLPEVNTTCSNLLLFWLVSQEPKDQRPLGTYPDEHFTEEAPRQSIAAFQKCLAQISKDIRARNESLALPYAYLDPPLIENSVSI.

In terms of domain architecture, PLAT spans 2–119 (AVYRLCVTTG…TVELRPGTAR (118 aa)). The 593-residue stretch at 119-711 (RTICQDALPL…PPLIENSVSI (593 aa)) folds into the Lipoxygenase domain. Residues histidine 408, histidine 413, histidine 588, asparagine 592, and isoleucine 711 each contribute to the Fe cation site.

The protein belongs to the lipoxygenase family. The cofactor is Fe cation.

It localises to the cytoplasm. The catalysed reaction is a hydroperoxyeicosatetraenoate = a hydroxy-epoxy-eicosatetraenoate. The enzyme catalyses a hydroperoxyeicosatetraenoate = an oxoeicosatetraenoate + H2O. It catalyses the reaction (12R)-hydroperoxy-(5Z,8Z,10E,14Z)-eicosatetraenoate = (8R)-hydroxy-(11R,12R)-epoxy-(5Z,9E,14Z)-eicosatrienoate. It carries out the reaction (12S)-hydroperoxy-(5Z,8Z,10E,14Z)-eicosatetraenoate = (8R)-hydroxy-(11S,12S)-epoxy-(5Z,9E,14Z)-eicosatrienoate. The catalysed reaction is (12S)-hydroperoxy-(5Z,8Z,10E,14Z)-eicosatetraenoate = (10R)-hydroxy-(11S,12S)-epoxy-(5Z,8Z,14Z)-eicosatrienoate. The enzyme catalyses (15S)-hydroperoxy-(5Z,8Z,11Z,13E)-eicosatetraenoate = (13R)-hydroxy-(14S,15S)-epoxy-(5Z,8Z,11Z)-eicosatrienoate. It catalyses the reaction (5S)-hydroperoxy-(6E,8Z,11Z,14Z)-eicosatetraenoate = 7R-hydroxy-5S,6S-epoxy-(8Z,11Z,14Z)-eicosatrienoate. It carries out the reaction (13S)-hydroperoxy-(9Z,11E)-octadecadienoate = 11-hydroxy-(12S,13S)-epoxy-(9Z)-octadecenoate. The catalysed reaction is N-[omega-(9R)-hydroperoxy-(10E,12Z)-octadecadienoyloxy]acyl-beta-D-glucosyl-(1&lt;-&gt;1)-octadecasphing-4E-enine = a N-[omega-(9R,10R)-epoxy-(13R)-hydroxy-(11E)-octadecenoyloxy]acyl-beta-D-glucosyl-(1&lt;-&gt;1)-sphing-4E-enine. The enzyme catalyses a N-[omega-(9R)-hydroperoxy-(10E,12Z)-octadecadienoyloxy]-acylsphin-4E-enine = a N-[omega-(9R,10R)-epoxy-(13R)-hydroxy-(11E)-octadecenoyloxy]-acylsphing-4E-enine. It catalyses the reaction (12R)-hydroperoxy-(5Z,8Z,10E,14Z)-eicosatetraenoate = 12-oxo-(5Z,8Z,10E,14Z)-eicosatetraenoate + H2O. It carries out the reaction (12S)-hydroperoxy-(5Z,8Z,10E,14Z)-eicosatetraenoate = 12-oxo-(5Z,8Z,10E,14Z)-eicosatetraenoate + H2O. The catalysed reaction is (15S)-hydroperoxy-(5Z,8Z,11Z,13E)-eicosatetraenoate = 15-oxo-(5Z,8Z,11Z,13E)-eicosatetraenoate + H2O. The enzyme catalyses (13S)-hydroperoxy-(9Z,11E)-octadecadienoate = 13-oxo-(9Z,11E)-octadecadienoate + H2O. It catalyses the reaction (8S)-hydroperoxy-(5Z,9E,11Z,14Z)-eicosatetraenoate = (10R)-hydroxy-(8S,9S)-epoxy-(5Z,11Z,14Z)-eicosatrienoate. It carries out the reaction (8R)-hydroperoxy-(5Z,9E,11Z,14Z)-eicosatetraenoate = 8-oxo-(5Z,9E,11Z,14Z)-eicosatetraenoate + H2O. The catalysed reaction is (8S)-hydroperoxy-(5Z,9E,11Z,14Z)-eicosatetraenoate = 8-oxo-(5Z,9E,11Z,14Z)-eicosatetraenoate + H2O. The protein operates within lipid metabolism; hydroperoxy eicosatetraenoic acid biosynthesis. It functions in the pathway lipid metabolism; sphingolipid metabolism. In terms of biological role, non-heme iron-containing lipoxygenase which is atypical in that it displays a prominent hydroperoxide isomerase activity and a reduced lipoxygenases activity. The hydroperoxide isomerase activity catalyzes the isomerization of hydroperoxides, derived from arachidonic and linoleic acid by ALOX12B, into hepoxilin-type epoxyalcohols and ketones. In presence of oxygen, oxygenates polyunsaturated fatty acids, including arachidonic acid, to produce fatty acid hydroperoxides. In the skin, acts downstream of ALOX12B on the linoleate moiety of esterified omega-hydroxyacyl-sphingosine (EOS) ceramides to produce an epoxy-ketone derivative, a crucial step in the conjugation of omega-hydroxyceramide to membrane proteins. Therefore plays a crucial role in the synthesis of corneocytes lipid envelope and the establishment of the skin barrier to water loss. In parallel, it may have a signaling function in barrier formation through the production of hepoxilins metabolites. Also plays a role in adipocyte differentiation through hepoxilin A3 and hepoxilin B3 production which in turn activate PPARG. Through the production of hepoxilins in the spinal cord, it may regulate inflammatory tactile allodynia. This chain is Hydroperoxide isomerase ALOXE3, found in Rattus norvegicus (Rat).